Here is a 525-residue protein sequence, read N- to C-terminus: GMP synthase [glutamine-hydrolyzing] (525 aa).

Positions 9–207 (RILILDFGSQ…ILDICGCEAL (199 aa)) constitute a Glutamine amidotransferase type-1 domain. The active-site Nucleophile is the C86. Residues H181 and E183 contribute to the active site. Residues 208–400 (WTPSKIAEDA…LGLPYDMVYR (193 aa)) enclose the GMPS ATP-PPase domain. Position 235–241 (235–241 (SGGVDSS)) interacts with ATP.

Homodimer.

The enzyme catalyses XMP + L-glutamine + ATP + H2O = GMP + L-glutamate + AMP + diphosphate + 2 H(+). Its pathway is purine metabolism; GMP biosynthesis; GMP from XMP (L-Gln route): step 1/1. Catalyzes the synthesis of GMP from XMP. The protein is GMP synthase [glutamine-hydrolyzing] of Pseudomonas fluorescens (strain ATCC BAA-477 / NRRL B-23932 / Pf-5).